We begin with the raw amino-acid sequence, 440 residues long: MGEKPTIAISHLGCEKNRIDTEHMLGLLVKAGYGVDTNEELADYVIVNTCSFIESAREESVKTLVELAEANKKIVITGCMAQHFQTQLLEELPEAVAVVGTGDYHKIVNVIERAEQGERVTLVSAKPTYIADETTPRYRTTTEGVAYLRVAEGCDYRCAFCIIPHLRGNQRSRTIESIVAEAEQLVAQGVQEIILISQITTNYGLDIYGKPKLAELLRALGKINVPWIRMHYAYPTGLTPDVIAAIQETPNVLPYLDLPLQHSHSEVLRSMNRPWQGRVNDEIIERLKIAIPGAVLRTTFIVGFPGETEAQFEHLLQFVQRHEFDHVGVFTFSAEEGTPAYKLSNQLPQEVMDERRDRLMALQQPISWRKNQQEVGKTVEVLIEQENPESGKLIGRSGRFSPEVDGQVYVDGEAKLGTIIPVKIHSADEYDLFGQVVSHN.

Residues 5–116 (PTIAISHLGC…IVNVIERAEQ (112 aa)) enclose the MTTase N-terminal domain. [4Fe-4S] cluster is bound by residues Cys14, Cys50, Cys79, Cys154, Cys158, and Cys161. One can recognise a Radical SAM core domain in the interval 140 to 370 (TTTEGVAYLR…ALQQPISWRK (231 aa)). The region spanning 372-438 (QQEVGKTVEV…EYDLFGQVVS (67 aa)) is the TRAM domain.

It belongs to the methylthiotransferase family. RimO subfamily. It depends on [4Fe-4S] cluster as a cofactor.

The protein localises to the cytoplasm. The enzyme catalyses L-aspartate(89)-[ribosomal protein uS12]-hydrogen + (sulfur carrier)-SH + AH2 + 2 S-adenosyl-L-methionine = 3-methylsulfanyl-L-aspartate(89)-[ribosomal protein uS12]-hydrogen + (sulfur carrier)-H + 5'-deoxyadenosine + L-methionine + A + S-adenosyl-L-homocysteine + 2 H(+). Catalyzes the methylthiolation of an aspartic acid residue of ribosomal protein uS12. The protein is Ribosomal protein uS12 methylthiotransferase RimO of Trichormus variabilis (strain ATCC 29413 / PCC 7937) (Anabaena variabilis).